A 676-amino-acid chain; its full sequence is UvrABC system protein B (676 aa).

The region spanning Glu-26–Val-414 is the Helicase ATP-binding domain. Position 39 to 46 (Gly-39 to Thr-46) interacts with ATP. The Beta-hairpin motif lies at Tyr-92–Val-115. A Helicase C-terminal domain is found at Gln-432–Met-598. Residues Glu-636–Gln-671 form the UVR domain.

Belongs to the UvrB family. As to quaternary structure, forms a heterotetramer with UvrA during the search for lesions. Interacts with UvrC in an incision complex.

It localises to the cytoplasm. In terms of biological role, the UvrABC repair system catalyzes the recognition and processing of DNA lesions. A damage recognition complex composed of 2 UvrA and 2 UvrB subunits scans DNA for abnormalities. Upon binding of the UvrA(2)B(2) complex to a putative damaged site, the DNA wraps around one UvrB monomer. DNA wrap is dependent on ATP binding by UvrB and probably causes local melting of the DNA helix, facilitating insertion of UvrB beta-hairpin between the DNA strands. Then UvrB probes one DNA strand for the presence of a lesion. If a lesion is found the UvrA subunits dissociate and the UvrB-DNA preincision complex is formed. This complex is subsequently bound by UvrC and the second UvrB is released. If no lesion is found, the DNA wraps around the other UvrB subunit that will check the other stand for damage. The polypeptide is UvrABC system protein B (Vibrio vulnificus (strain CMCP6)).